The sequence spans 129 residues: Ribosome-binding factor A (129 aa).

Belongs to the RbfA family. In terms of assembly, monomer. Binds 30S ribosomal subunits, but not 50S ribosomal subunits or 70S ribosomes.

It is found in the cytoplasm. Its function is as follows. One of several proteins that assist in the late maturation steps of the functional core of the 30S ribosomal subunit. Associates with free 30S ribosomal subunits (but not with 30S subunits that are part of 70S ribosomes or polysomes). Required for efficient processing of 16S rRNA. May interact with the 5'-terminal helix region of 16S rRNA. This is Ribosome-binding factor A from Gloeobacter violaceus (strain ATCC 29082 / PCC 7421).